Consider the following 341-residue polypeptide: Ubiquinone biosynthesis protein COQ4, mitochondrial (341 aa).

A mitochondrion-targeting transit peptide spans 1-16 (MLSRISSVRIGTQVRQ). The Zn(2+) site is built by H220, D221, H224, and E236.

It belongs to the COQ4 family. Component of a multi-subunit COQ enzyme complex, composed of at least COQ3, COQ4, COQ5, COQ6, COQ7 and COQ9. Zn(2+) serves as cofactor.

It localises to the mitochondrion inner membrane. The catalysed reaction is a 4-hydroxy-3-methoxy-5-(all-trans-polyprenyl)benzoate + H(+) = a 2-methoxy-6-(all-trans-polyprenyl)phenol + CO2. The protein operates within cofactor biosynthesis; ubiquinone biosynthesis. In terms of biological role, lyase that catalyzes the C1-decarboxylation of 4-hydroxy-3-methoxy-5-(all-trans-polyprenyl)benzoic acid into 2-methoxy-6-(all-trans-polyprenyl)phenol during ubiquinone biosynthesis. In Vanderwaltozyma polyspora (strain ATCC 22028 / DSM 70294 / BCRC 21397 / CBS 2163 / NBRC 10782 / NRRL Y-8283 / UCD 57-17) (Kluyveromyces polysporus), this protein is Ubiquinone biosynthesis protein COQ4, mitochondrial.